A 262-amino-acid chain; its full sequence is Abhydrolase domain-containing protein ACTT2-1 (262 aa).

A Peroxisomal targeting signal type 1 motif is present at residues 260 to 262 (SKL).

It belongs to the AB hydrolase superfamily. AKT2 hydrolase family.

It localises to the peroxisome. Its pathway is mycotoxin biosynthesis. Its function is as follows. Abhydrolase domain-containing protein; part of the gene clusters that mediate the biosynthesis of the host-selective toxins (HSTs) ACT-toxins responsible for brown spot of tangerine disease by the tangerine pathotype which affects tangerines and mandarins. ACT-toxins consist of three moieties, 9,10-epoxy-8-hydroxy-9-methyl-decatrienoic acid (EDA), valine and a polyketide. ACT-toxin I is toxic to both citrus and pear; toxin II the 5''-deoxy derivative of ACT-toxin I, is highly toxic to pear and slightly toxic to citrus. On cellular level, ACT-toxins affect plasma membrane of susceptible cells and cause a sudden increase in loss of K(+) after a few minutes of toxin treatment. The acyl-CoA ligase ACTT1, the hydrolase ACTT2, the enoyl-CoA hydratases ACTT3 and ACTT6, and the acyl-CoA synthetase ACTT5 are all involved in the biosynthesis of the AK-, AF- and ACT-toxin common 9,10-epoxy-8-hydroxy-9-methyl-decatrienoic acid (EDA) structural moiety. The exact role of each enzyme, and of additional enzymes identified within the AF-toxin clusters have still to be determined. On the other hand, ACTTS1 to ACTTS4 are specific to the tangerine pathotype. The function of ACTTS3 is to elongate the polyketide chain portion of ACT-toxin that is unique to this toxin. The enoyl-reductase ACTTS2 might complement the missing enoyl-reductase (ER) domain in ACTTS3 in the synthesis of the polyketide portion of ACT-toxin. The roles of the nonribosomal peptide synthetases-related proteins ACTTS1 and ACTTS4 have also still not been elucidated. This chain is Abhydrolase domain-containing protein ACTT2-1, found in Alternaria alternata (Alternaria rot fungus).